The primary structure comprises 101 residues: Urease subunit beta (101 aa).

The protein belongs to the urease beta subunit family. Heterotrimer of UreA (gamma), UreB (beta) and UreC (alpha) subunits. Three heterotrimers associate to form the active enzyme.

Its subcellular location is the cytoplasm. The enzyme catalyses urea + 2 H2O + H(+) = hydrogencarbonate + 2 NH4(+). Its pathway is nitrogen metabolism; urea degradation; CO(2) and NH(3) from urea (urease route): step 1/1. This chain is Urease subunit beta, found in Cupriavidus pinatubonensis (strain JMP 134 / LMG 1197) (Cupriavidus necator (strain JMP 134)).